Consider the following 95-residue polypeptide: Aspartyl/glutamyl-tRNA(Asn/Gln) amidotransferase subunit C (95 aa).

The protein belongs to the GatC family. Heterotrimer of A, B and C subunits.

It carries out the reaction L-glutamyl-tRNA(Gln) + L-glutamine + ATP + H2O = L-glutaminyl-tRNA(Gln) + L-glutamate + ADP + phosphate + H(+). The enzyme catalyses L-aspartyl-tRNA(Asn) + L-glutamine + ATP + H2O = L-asparaginyl-tRNA(Asn) + L-glutamate + ADP + phosphate + 2 H(+). Functionally, allows the formation of correctly charged Asn-tRNA(Asn) or Gln-tRNA(Gln) through the transamidation of misacylated Asp-tRNA(Asn) or Glu-tRNA(Gln) in organisms which lack either or both of asparaginyl-tRNA or glutaminyl-tRNA synthetases. The reaction takes place in the presence of glutamine and ATP through an activated phospho-Asp-tRNA(Asn) or phospho-Glu-tRNA(Gln). The chain is Aspartyl/glutamyl-tRNA(Asn/Gln) amidotransferase subunit C from Sinorhizobium fredii (strain NBRC 101917 / NGR234).